We begin with the raw amino-acid sequence, 167 residues long: LIM domain transcription factor LMO4.1 (167 aa).

The span at 1-17 shows a compositional bias: polar residues; it reads MVNNRVTESTTTAVSSN. The disordered stretch occupies residues 1–20; the sequence is MVNNRVTESTTTAVSSNGGP. LIM zinc-binding domains follow at residues 22–84 and 86–148; these read KACA…LFGS and GACS…GLLS.

Acts as a positive cofactor of GATA transcription factors to establish the identity of the ventral mesoderm during gastrulation. Down-regulation in the dorsal mesoderm is necessary for the proper formation of this territory since, when present, lmo4 may bind ldb1 and restrict the availability of this cofactor for Spemman organizer transcription factors. At neurula stages, suppresses primary neuron differentiation and modulates gene expression at the Isthmic Organizer of the midbrain-hindbrain boundary. The chain is LIM domain transcription factor LMO4.1 (lmo4.1) from Xenopus tropicalis (Western clawed frog).